The following is a 147-amino-acid chain: MKSLKKKRRIQILVAAAVALVLAVGLIGYGFRDGINLYRSPSQMAENPPEAGEVFRLGGLVEDGSLVRGASETVTFRVTDGGATVPVRFTGVLPDLFSEGQGMIGTGRMEGETFVASEILAKHDENYMPREVMDSLKEQGVYQEPNS.

The Cytoplasmic portion of the chain corresponds to 1 to 9; that stretch reads MKSLKKKRR. The chain crosses the membrane as a helical; Signal-anchor for type II membrane protein span at residues 10 to 30; that stretch reads IQILVAAAVALVLAVGLIGYG. Topologically, residues 31-147 are periplasmic; the sequence is FRDGINLYRS…EQGVYQEPNS (117 aa). Residues His123 and Tyr127 each contribute to the heme site.

It belongs to the CcmE/CycJ family.

The protein localises to the cell inner membrane. Its function is as follows. Heme chaperone required for the biogenesis of c-type cytochromes. Transiently binds heme delivered by CcmC and transfers the heme to apo-cytochromes in a process facilitated by CcmF and CcmH. The polypeptide is Cytochrome c-type biogenesis protein CcmE (Paracoccus denitrificans (strain Pd 1222)).